The following is a 426-amino-acid chain: Glutamate-1-semialdehyde 2,1-aminomutase (426 aa).

Lysine 265 bears the N6-(pyridoxal phosphate)lysine mark.

It belongs to the class-III pyridoxal-phosphate-dependent aminotransferase family. HemL subfamily. As to quaternary structure, homodimer. It depends on pyridoxal 5'-phosphate as a cofactor.

It is found in the cytoplasm. The enzyme catalyses (S)-4-amino-5-oxopentanoate = 5-aminolevulinate. It participates in porphyrin-containing compound metabolism; protoporphyrin-IX biosynthesis; 5-aminolevulinate from L-glutamyl-tRNA(Glu): step 2/2. The protein is Glutamate-1-semialdehyde 2,1-aminomutase of Salmonella typhi.